Reading from the N-terminus, the 406-residue chain is Olfactomedin-like protein 3 (406 aa).

Residues 1 to 21 form the signal peptide; sequence MGPSTPLLILFLLSWSGPLQG. Residues 25-101 adopt a coiled-coil conformation; the sequence is HLVEYMERRL…REVDYLETQN (77 aa). Positions 134–401 constitute an Olfactomedin-like domain; the sequence is DCGYTISQVR…QIVYKLEMRK (268 aa). Cysteines 135 and 328 form a disulfide. N-linked (GlcNAc...) asparagine glycans are attached at residues Asn177 and Asn248.

This sequence belongs to the OLFML3 family. As to expression, abundant in placenta, moderate in liver and heart, whereas fairly weak in other tissues examined. On term placenta, mainly localized extracellularly surrounding the syncytiotrophoblastic cells and very rarely expressed in the maternal decidua layer.

The protein localises to the secreted. In terms of biological role, secreted scaffold protein that plays an essential role in dorsoventral patterning during early development. Stabilizes axial formation by restricting chordin (CHRD) activity on the dorsal side. Acts by facilitating the association between the tolloid proteases and their substrate chordin (CHRD), leading to enhance chordin (CHRD) degradation. May have matrix-related function involved in placental and embryonic development, or play a similar role in other physiological processes. The protein is Olfactomedin-like protein 3 (OLFML3) of Homo sapiens (Human).